A 1252-amino-acid chain; its full sequence is DNA-directed RNA polymerase subunit beta (1252 aa).

Belongs to the RNA polymerase beta chain family. The RNAP catalytic core consists of 2 alpha, 1 beta, 1 beta' and 1 omega subunit. When a sigma factor is associated with the core the holoenzyme is formed, which can initiate transcription.

The catalysed reaction is RNA(n) + a ribonucleoside 5'-triphosphate = RNA(n+1) + diphosphate. DNA-dependent RNA polymerase catalyzes the transcription of DNA into RNA using the four ribonucleoside triphosphates as substrates. The polypeptide is DNA-directed RNA polymerase subunit beta (Chlamydia felis (strain Fe/C-56) (Chlamydophila felis)).